Consider the following 425-residue polypeptide: 2-oxoglutarate and iron-dependent oxygenase JMJD4 (425 aa).

One can recognise a JmjC domain in the interval 141 to 300 (SRAFPEQDVY…IMWCFLQDEL (160 aa)). Fe cation-binding residues include His-188, Asp-190, and His-268.

It belongs to the JMJD6 family. Requires Fe(2+) as cofactor.

The protein localises to the cytoplasm. It carries out the reaction L-lysyl-[protein] + 2-oxoglutarate + O2 = 4-hydroxy-L-lysyl-[protein] + succinate + CO2. In terms of biological role, catalyzes the 2-oxoglutarate and iron-dependent C4-lysyl hydroxylation of ETF1 at 'Lys-63' thereby promoting the translational termination efficiency of ETF1. The sequence is that of 2-oxoglutarate and iron-dependent oxygenase JMJD4 (JMJD4) from Gallus gallus (Chicken).